Here is a 245-residue protein sequence, read N- to C-terminus: 1-(5-phosphoribosyl)-5-[(5-phosphoribosylamino)methylideneamino] imidazole-4-carboxamide isomerase (245 aa).

D8 acts as the Proton acceptor in catalysis. D130 serves as the catalytic Proton donor.

The protein belongs to the HisA/HisF family.

The protein resides in the cytoplasm. It catalyses the reaction 1-(5-phospho-beta-D-ribosyl)-5-[(5-phospho-beta-D-ribosylamino)methylideneamino]imidazole-4-carboxamide = 5-[(5-phospho-1-deoxy-D-ribulos-1-ylimino)methylamino]-1-(5-phospho-beta-D-ribosyl)imidazole-4-carboxamide. It functions in the pathway amino-acid biosynthesis; L-histidine biosynthesis; L-histidine from 5-phospho-alpha-D-ribose 1-diphosphate: step 4/9. This chain is 1-(5-phosphoribosyl)-5-[(5-phosphoribosylamino)methylideneamino] imidazole-4-carboxamide isomerase, found in Teredinibacter turnerae (strain ATCC 39867 / T7901).